Here is a 222-residue protein sequence, read N- to C-terminus: Putative metal transport protein MJ1569 (222 aa).

6 helical membrane passes run 3 to 23 (IPDG…MIPI), 39 to 59 (LPLL…NLPV), 81 to 101 (WVAT…FGDG), 102 to 122 (GITC…FVGY), 135 to 155 (VIAS…VAGF), and 180 to 200 (AFAH…IVVW).

It belongs to the CbiM family.

The protein resides in the cell membrane. May be involved in metal transport. The chain is Putative metal transport protein MJ1569 from Methanocaldococcus jannaschii (strain ATCC 43067 / DSM 2661 / JAL-1 / JCM 10045 / NBRC 100440) (Methanococcus jannaschii).